A 302-amino-acid chain; its full sequence is Citrate lyase subunit beta (302 aa).

Substrate contacts are provided by Arg-69 and Glu-132. Mg(2+) is bound by residues Glu-132 and Asp-159.

This sequence belongs to the HpcH/HpaI aldolase family. Citrate lyase beta subunit subfamily. Oligomer with a subunit composition of (alpha,beta,gamma)6. Mg(2+) is required as a cofactor.

Its subcellular location is the cytoplasm. It carries out the reaction citrate = oxaloacetate + acetate. The enzyme catalyses (3S)-citryl-CoA = oxaloacetate + acetyl-CoA. In terms of biological role, represents a citryl-ACP lyase. The polypeptide is Citrate lyase subunit beta (citE) (Leuconostoc mesenteroides subsp. cremoris).